The sequence spans 692 residues: Elongation factor G (692 aa).

Residues 8 to 282 (DKTRNIGIMA…AVLDYLPAPT (275 aa)) form the tr-type G domain. Residues 17 to 24 (AHIDAGKT), 81 to 85 (DTPGH), and 135 to 138 (NKMD) each bind GTP.

Belongs to the TRAFAC class translation factor GTPase superfamily. Classic translation factor GTPase family. EF-G/EF-2 subfamily.

It localises to the cytoplasm. Functionally, catalyzes the GTP-dependent ribosomal translocation step during translation elongation. During this step, the ribosome changes from the pre-translocational (PRE) to the post-translocational (POST) state as the newly formed A-site-bound peptidyl-tRNA and P-site-bound deacylated tRNA move to the P and E sites, respectively. Catalyzes the coordinated movement of the two tRNA molecules, the mRNA and conformational changes in the ribosome. This Bacillus pumilus (strain SAFR-032) protein is Elongation factor G.